The sequence spans 489 residues: Glycogen synthase (489 aa).

Arginine 20 lines the ADP-alpha-D-glucose pocket.

Belongs to the glycosyltransferase 1 family. Bacterial/plant glycogen synthase subfamily.

It catalyses the reaction [(1-&gt;4)-alpha-D-glucosyl](n) + ADP-alpha-D-glucose = [(1-&gt;4)-alpha-D-glucosyl](n+1) + ADP + H(+). It participates in glycan biosynthesis; glycogen biosynthesis. Functionally, synthesizes alpha-1,4-glucan chains using ADP-glucose. The protein is Glycogen synthase of Pelodictyon phaeoclathratiforme (strain DSM 5477 / BU-1).